The following is a 375-amino-acid chain: Deoxyhypusine synthase-like protein (375 aa).

Belongs to the deoxyhypusine synthase family.

The chain is Deoxyhypusine synthase-like protein from Elusimicrobium minutum (strain Pei191).